The sequence spans 953 residues: Zinc finger protein 618 (953 aa).

Met1 bears the N-acetylmethionine mark. The tract at residues 1–56 (MSQPDGAAAPQVDGASAPGRKSAVNRERLKRSQKSSKVEGPEPVPAEASLSAEQGT) is disordered. Residues Lys63 and Lys81 each participate in a glycyl lysine isopeptide (Lys-Gly) (interchain with G-Cter in SUMO2) cross-link. C2H2-type zinc fingers lie at residues 146 to 168 (YECGICGKKYKYYNCFQTHVRAH) and 187 to 209 (YTCDICGKKYKYYSCFQEHRDLH). Lys238 participates in a covalent cross-link: Glycyl lysine isopeptide (Lys-Gly) (interchain with G-Cter in SUMO2). Residues 255-277 (YTCEFCGKQYKYYTPYQEHVALH) form a C2H2-type 3 zinc finger. Disordered stretches follow at residues 283–305 (APGWEPPEDPDTGSECSHPEVTP) and 337–390 (TPPA…SSEP). The segment covering 339–354 (PATQTQTFRAPNSGSP) has biased composition (polar residues). Basic and acidic residues predominate over residues 365–379 (FSRRVESKAQNHFEE). The segment at 391 to 413 (YTCGACGIQFQFYSNLLEHMQSH) adopts a C2H2-type 4 zinc-finger fold. A compositionally biased stretch (polar residues) spans 419 to 428 (NNITSNQSRS). Positions 419–461 (NNITSNQSRSPPAAVEEKWKPQAQRNSANNTTTSGLTPNSVIP) are disordered. Residue Lys436 forms a Glycyl lysine isopeptide (Lys-Gly) (interchain with G-Cter in SUMO2) linkage. Residues 441–458 (AQRNSANNTTTSGLTPNS) show a composition bias toward polar residues.

This sequence belongs to the krueppel C2H2-type zinc-finger protein family. Interacts with UHRF2.

Its subcellular location is the nucleus. The protein resides in the chromosome. Functionally, regulates UHRF2 function as a specific 5-hydroxymethylcytosine (5hmC) reader by regulating its chromatin localization. The sequence is that of Zinc finger protein 618 (Znf618) from Mus musculus (Mouse).